The primary structure comprises 967 residues: Translation initiation factor IF-2 (967 aa).

Disordered stretches follow at residues Lys-201–Val-320 and Leu-349–Ala-382. Over residues Thr-233–Asn-248 the composition is skewed to polar residues. Positions Pro-256–Asn-272 are enriched in low complexity. The span at Asn-354 to Arg-363 shows a compositional bias: basic residues. A compositionally biased stretch (basic and acidic residues) spans Asp-364–Ala-382. Residues His-465 to Lys-635 form the tr-type G domain. Residues Gly-474–Thr-481 are G1. Gly-474 to Thr-481 lines the GTP pocket. Residues Gly-499–His-503 form a G2 region. Residues Asp-521–Gly-524 are G3. GTP-binding positions include Asp-521–His-525 and Asn-575–Asp-578. The segment at Asn-575–Asp-578 is G4. The G5 stretch occupies residues Ser-611 to Lys-613.

The protein belongs to the TRAFAC class translation factor GTPase superfamily. Classic translation factor GTPase family. IF-2 subfamily.

It localises to the cytoplasm. Functionally, one of the essential components for the initiation of protein synthesis. Protects formylmethionyl-tRNA from spontaneous hydrolysis and promotes its binding to the 30S ribosomal subunits. Also involved in the hydrolysis of GTP during the formation of the 70S ribosomal complex. The polypeptide is Translation initiation factor IF-2 (Flavobacterium psychrophilum (strain ATCC 49511 / DSM 21280 / CIP 103535 / JIP02/86)).